We begin with the raw amino-acid sequence, 323 residues long: Solute carrier family 35 member B1 (323 aa).

8 helical membrane-spanning segments follow: residues 15 to 35 (LVCF…QETI), 51 to 71 (FALS…KLLI), 85 to 105 (WLYA…NSAL), 136 to 156 (YPLS…LFMY), 169 to 189 (TFGY…LTGV), 205 to 225 (MMLY…VFTG), 253 to 273 (LGQT…CSII), and 286 to 306 (VILF…LVFL). The Di-lysine motif motif lies at 319 to 323 (KKPSH).

The protein belongs to the nucleotide-sugar transporter family. SLC35B subfamily.

It localises to the endoplasmic reticulum membrane. Probable sugar transporter. The polypeptide is Solute carrier family 35 member B1 (slc35b1) (Xenopus tropicalis (Western clawed frog)).